Consider the following 168-residue polypeptide: Regulatory protein RecX (168 aa).

It belongs to the RecX family.

Its subcellular location is the cytoplasm. In terms of biological role, modulates RecA activity. The chain is Regulatory protein RecX from Serratia proteamaculans (strain 568).